Here is a 224-residue protein sequence, read N- to C-terminus: Oxalate oxidase GF-2.8 (224 aa).

The N-terminal stretch at 1–23 is a signal peptide; that stretch reads MGYSKTLVAGLFAMLLLAPAVLA. A disulfide bridge links Cys-33 with Cys-49. A Cupin type-1 domain is found at 63–214; that stretch reads SKLAKAGNTS…ALRVEARVVE (152 aa). Asn-70 and Asn-75 each carry an N-linked (GlcNAc...) asparagine glycan. Mn(2+)-binding residues include His-111, His-113, Glu-118, and His-160.

It belongs to the germin family. Oligomer (believed to be a pentamer but probably hexamer).

Its subcellular location is the secreted. It localises to the extracellular space. It is found in the apoplast. The protein resides in the cytoplasm. The protein localises to the cell wall. It carries out the reaction oxalate + O2 + 2 H(+) = H2O2 + 2 CO2. In terms of biological role, produces developmental and stress-related release of hydrogen peroxide in the apoplast. May play an important role in several aspects of plant growth and defense mechanisms. The chain is Oxalate oxidase GF-2.8 from Triticum aestivum (Wheat).